We begin with the raw amino-acid sequence, 244 residues long: Glutathione S-transferase theta-2 (244 aa).

Positions 2-82 (GLELFLDLVS…YLSCKYQTPD (81 aa)) constitute a GST N-terminal domain. Glutathione contacts are provided by residues 40–41 (HK), 53–54 (KL), 66–67 (ES), and 104–107 (DCIR). In terms of domain architecture, GST C-terminal spans 88 to 224 (DLQARARVHE…SILEQAAKKT (137 aa)).

It belongs to the GST superfamily. Theta family. In terms of assembly, homodimer. In terms of tissue distribution, expressed at low levels in liver. In lung, expressed at low levels in ciliated bronchiolar cells, alveolar macrophages and alveolar type II cells.

The protein localises to the cytoplasm. It localises to the cytosol. The protein resides in the nucleus. It catalyses the reaction RX + glutathione = an S-substituted glutathione + a halide anion + H(+). Its function is as follows. Conjugation of reduced glutathione to a wide number of exogenous and endogenous hydrophobic electrophiles. Has a sulfatase activity. This is Glutathione S-transferase theta-2 (GSTT2) from Homo sapiens (Human).